A 396-amino-acid chain; its full sequence is S-adenosylmethionine synthase 3 (396 aa).

Glutamate 12 is a Mg(2+) binding site. An ATP-binding site is contributed by histidine 18. Glutamate 46 contacts K(+). L-methionine contacts are provided by glutamate 59 and glutamine 102. ATP-binding positions include 170-172 (DGK), 238-241 (SGRF), aspartate 249, 255-256 (RK), alanine 272, lysine 276, and lysine 280. An L-methionine-binding site is contributed by aspartate 249. An L-methionine-binding site is contributed by lysine 280.

Belongs to the AdoMet synthase family. Homotetramer. Mn(2+) serves as cofactor. The cofactor is Mg(2+). Co(2+) is required as a cofactor. Requires K(+) as cofactor.

Its subcellular location is the cytoplasm. The enzyme catalyses L-methionine + ATP + H2O = S-adenosyl-L-methionine + phosphate + diphosphate. It participates in amino-acid biosynthesis; S-adenosyl-L-methionine biosynthesis; S-adenosyl-L-methionine from L-methionine: step 1/1. Functionally, catalyzes the formation of S-adenosylmethionine from methionine and ATP. The reaction comprises two steps that are both catalyzed by the same enzyme: formation of S-adenosylmethionine (AdoMet) and triphosphate, and subsequent hydrolysis of the triphosphate. This is S-adenosylmethionine synthase 3 (METK3) from Oryza sativa subsp. japonica (Rice).